Consider the following 520-residue polypeptide: Laccase-2 (520 aa).

The first 19 residues, 1–19, serve as a signal peptide directing secretion; that stretch reads MRFSNAFVLVAACISSVLA. 3 Plastocyanin-like domains span residues 21-145, 157-305, and 375-488; these read TKTF…FVVY, VDDE…LTLA, and TVPV…FAEA. Positions 82 and 84 each coordinate Cu cation. 2 disulfide bridges follow: Cys-103/Cys-509 and Cys-135/Cys-229. N-linked (GlcNAc...) asparagine glycosylation is present at Asn-108. Cu cation is bound by residues His-127 and His-129. N-linked (GlcNAc...) asparagine glycosylation is found at Asn-241 and Asn-299. Residues His-417, His-420, His-422, His-470, Cys-471, His-472, and His-476 each contribute to the Cu cation site. Asn-492 carries N-linked (GlcNAc...) asparagine glycosylation.

Belongs to the multicopper oxidase family. Cu cation serves as cofactor.

The protein localises to the secreted. It carries out the reaction 4 hydroquinone + O2 = 4 benzosemiquinone + 2 H2O. In terms of biological role, lignin degradation and detoxification of lignin-derived products. This is Laccase-2 (lcc2) from Agaricus bisporus (White button mushroom).